The primary structure comprises 235 residues: AA9 family lytic polysaccharide monooxygenase D (235 aa).

An N-terminal signal peptide occupies residues 1–18 (MKAFFAVLAVVSAPFVLG). Residue His-19 coordinates Cu(2+). Ser-29 carries an O-linked (Man...) serine glycan. Cys-61 and Cys-181 are oxidised to a cystine. Cu(2+) is bound at residue His-94. 2 residues coordinate O2: His-167 and Gln-176. A Cu(2+)-binding site is contributed by Tyr-178. An N-linked (GlcNAc...) asparagine glycan is attached at Asn-221.

This sequence belongs to the polysaccharide monooxygenase AA9 family. Cu(2+) is required as a cofactor.

Its subcellular location is the secreted. The catalysed reaction is [(1-&gt;4)-beta-D-glucosyl]n+m + reduced acceptor + O2 = 4-dehydro-beta-D-glucosyl-[(1-&gt;4)-beta-D-glucosyl]n-1 + [(1-&gt;4)-beta-D-glucosyl]m + acceptor + H2O.. In terms of biological role, lytic polysaccharide monooxygenase (LPMO) that depolymerizes crystalline and amorphous polysaccharides via the oxidation of scissile alpha- or beta-(1-4)-glycosidic bonds, yielding only C1 oxidation products. Catalysis by LPMOs requires the reduction of the active-site copper from Cu(II) to Cu(I) by a reducing agent and H(2)O(2) or O(2) as a cosubstrate. The sequence is that of AA9 family lytic polysaccharide monooxygenase D from Phanerodontia chrysosporium (White-rot fungus).